Consider the following 284-residue polypeptide: MKQKVVNIGDIKVANDLPFVLFGGMNVLESRDLAMRICEHYVTVTQKLGIPYVFKASFDKANRSSIHSYRGPGLEEGMKIFQELKQTFGVKVITDVHEASQAQPVADVVDVIQLPAFLARQTDLVEAMAKTGAVINVKKPQFVSPGQMGNIVDKFHEGGNDKVILCDRGANFGYDNLVVDMLGFGVMKKVSGNCPVIFDVTHALQCRDPFGAASGGRRGQVTELARAGMAVGLAGLFLESHPDPANAKCDGPSALPLAKLEQFLTQIKAIDDLVKSFDELDTEN.

The protein belongs to the KdsA family.

The protein resides in the cytoplasm. The catalysed reaction is D-arabinose 5-phosphate + phosphoenolpyruvate + H2O = 3-deoxy-alpha-D-manno-2-octulosonate-8-phosphate + phosphate. The protein operates within carbohydrate biosynthesis; 3-deoxy-D-manno-octulosonate biosynthesis; 3-deoxy-D-manno-octulosonate from D-ribulose 5-phosphate: step 2/3. It participates in bacterial outer membrane biogenesis; lipopolysaccharide biosynthesis. In Salmonella arizonae (strain ATCC BAA-731 / CDC346-86 / RSK2980), this protein is 2-dehydro-3-deoxyphosphooctonate aldolase.